A 596-amino-acid chain; its full sequence is MTTMTVHTMGVHYKWQIPEVLRQQLWLAHNLREDLVSLQLAYDDDLKAIWSSYPDVAQAEDTMAAAEADAVALSERVKQARIEARSKKISTELTQQLRDAKKRLKDARQARRDAIAVVKDDAAERRKARSDQLAADQKALYGQYCRDGDLYWASFNTVLDHHKTAVKRIAAQRASGKPATLRHHRFDGSGTIAVQLQRQAGAPPRTPMVLADEAGKYRNVLHIPGWTDPDVWEQMTRSQCRQSGRVTVRMRCGSTDGQPQWIDLPVQVHRWLPADADITGAELVVTRVAGIYRAKLCVTARIGDTEPVTSGPTVALHLGWRSTEEGTAVATWRSDAPLDIPFGLRTVMRVDAAGTSGIIVVPATIERRLTRTENIASSRSLALDALRDKVVGWLSDNDAPTYRDAPLEAATVKQWKSPQRFASLAHAWKDNGTEISDILWAWFSLDRKQWAQQENGRRKALGHRDDLYRQIAAVISDQAGHVLVDDTSVAELSARAMERTELPTEVQQKIDRRRDHAAPGGLRASVVAAMTRDGVPVTIVAAADFTRTHSRCGHVNPADDRYLSNPVRCDGCGAMYDQDRSFVTLMLRAATAPSNP.

The interval 19-53 is recognition domain (REC1-N); it reads EVLRQQLWLAHNLREDLVSLQLAYDDDLKAIWSSY. The recognition domain (REC2) stretch occupies residues 54–121; that stretch reads PDVAQAEDTM…RDAIAVVKDD (68 aa). Coiled coils occupy residues 55–83 and 91–117; these read DVAQ…ARIE and TELT…AIAV. The recognition domain (REC1-C) stretch occupies residues 122 to 190; sequence AAERRKARSD…LRHHRFDGSG (69 aa). The segment at 191-302 is wedge domain (WED); that stretch reads TIAVQLQRQA…RAKLCVTARI (112 aa). The interval 303–313 is linker; the sequence is GDTEPVTSGPT. The segment at 314–541 is ruvC-I; the sequence is VALHLGWRST…RDGVPVTIVA (228 aa). His317 contributes to the Mg(2+) binding site. The target nucleic-acid binding (TNB) stretch occupies residues 541–577; the sequence is AAADFTRTHSRCGHVNPADDRYLSNPVRCDGCGAMYD. Residues His549, Cys552, Cys569, and Cys572 each contribute to the Zn(2+) site. The interval 578–596 is ruvC-II; sequence QDRSFVTLMLRAATAPSNP. A Mg(2+)-binding site is contributed by Asp579.

Belongs to the CRISPR-associated DNA-binding protein Cas12m family. In terms of assembly, binds crRNA and target dsDNA as a monomer. It depends on Mg(2+) as a cofactor. The cofactor is Zn(2+).

In terms of biological role, CRISPR (clustered regularly interspaced short palindromic repeat), is an adaptive immune system that provides protection against mobile genetic elements (viruses, transposable elements and conjugative plasmids). CRISPR clusters contain sequences complementary to antecedent mobile elements and target invading nucleic acids. CRISPR clusters are transcribed and processed into CRISPR RNA (crRNA). Recognizes a short motif in the CRISPR repeat sequences (the 5' PAM or protospacer adjacent motif, 5'-TTN-3' in this organism) to help distinguish self versus nonself, as targets within the bacterial CRISPR locus do not have PAMs. Upon expression in E.coli as a CRISPR locus inhibits plasmid propagation when targeted to regions essential for plasmid propagation (replication origin and dnaA). The crRNA-Cas12m complex inhibits transcription from target DNA leading to gene silencing. Cas12m-crRNA binds DNA in a PAM-dependent, crRNA-guided fashion. Binds a 17-bp crRNA-ss-target DNA heteroduplex, in a 56 nucleotide crRNA. No dsDNA, ssDNA or RNA nuclease activity is seen for the crRNA-Cas12m complex. Is required to process pre-crRNA to mature crRNA without a tracrRNA. Upon expression in E.coli as a CRISPR region preferentially binds to its associated crRNA. The sequence is that of CRISPR-associated DNA-binding protein Cas12m from Mycolicibacterium mucogenicum (Mycobacterium mucogenicum).